Consider the following 199-residue polypeptide: VAMP-like protein YKT62 (199 aa).

A Longin domain is found at 7-131; it reads LVLKCDPETR…PYLKEASDKF (125 aa). Positions 139–199 constitute a v-SNARE coiled-coil homology domain; sequence KLLKIQRELD…KKTNSCCTLL (61 aa). Residue Cys195 is the site of S-palmitoyl cysteine attachment. The residue at position 196 (Cys196) is a Cysteine methyl ester. A lipid anchor (S-geranylgeranyl cysteine) is attached at Cys196. Positions 197-199 are cleaved as a propeptide — removed in mature form; the sequence is TLL.

Belongs to the synaptobrevin family. Interacts with SYP41. Core constituent of the SNARE complex required for membrane fusion at the trans-Golgi network.

The protein localises to the cell membrane. Functionally, involved in the secretory pathway. Essential for membrane fusion mediated by either SYP41 or SYP61; triggers the fusion of phospholipid vesicles containing SYP41 or SYP61 and VTI12. This Arabidopsis thaliana (Mouse-ear cress) protein is VAMP-like protein YKT62.